A 155-amino-acid polypeptide reads, in one-letter code: 6,7-dimethyl-8-ribityllumazine synthase (155 aa).

5-amino-6-(D-ribitylamino)uracil is bound by residues Phe23, 57–59 (AFE), and 81–83 (AVI). 86–87 (ST) lines the (2S)-2-hydroxy-3-oxobutyl phosphate pocket. Residue His89 is the Proton donor of the active site. Phe114 serves as a coordination point for 5-amino-6-(D-ribitylamino)uracil. Position 128 (Arg128) interacts with (2S)-2-hydroxy-3-oxobutyl phosphate.

It belongs to the DMRL synthase family.

It catalyses the reaction (2S)-2-hydroxy-3-oxobutyl phosphate + 5-amino-6-(D-ribitylamino)uracil = 6,7-dimethyl-8-(1-D-ribityl)lumazine + phosphate + 2 H2O + H(+). Its pathway is cofactor biosynthesis; riboflavin biosynthesis; riboflavin from 2-hydroxy-3-oxobutyl phosphate and 5-amino-6-(D-ribitylamino)uracil: step 1/2. Its function is as follows. Catalyzes the formation of 6,7-dimethyl-8-ribityllumazine by condensation of 5-amino-6-(D-ribitylamino)uracil with 3,4-dihydroxy-2-butanone 4-phosphate. This is the penultimate step in the biosynthesis of riboflavin. This Pelobacter propionicus (strain DSM 2379 / NBRC 103807 / OttBd1) protein is 6,7-dimethyl-8-ribityllumazine synthase.